The sequence spans 399 residues: Tryptophan synthase beta chain (399 aa).

An N6-(pyridoxal phosphate)lysine modification is found at Lys-90.

It belongs to the TrpB family. As to quaternary structure, tetramer of two alpha and two beta chains. Requires pyridoxal 5'-phosphate as cofactor.

It carries out the reaction (1S,2R)-1-C-(indol-3-yl)glycerol 3-phosphate + L-serine = D-glyceraldehyde 3-phosphate + L-tryptophan + H2O. It participates in amino-acid biosynthesis; L-tryptophan biosynthesis; L-tryptophan from chorismate: step 5/5. Functionally, the beta subunit is responsible for the synthesis of L-tryptophan from indole and L-serine. In Lactiplantibacillus plantarum (strain ATCC BAA-793 / NCIMB 8826 / WCFS1) (Lactobacillus plantarum), this protein is Tryptophan synthase beta chain.